The primary structure comprises 1127 residues: Disease resistance protein RPS6 (1127 aa).

Position 1 is an N-acetylmethionine (M1). The region spanning 12–176 (WSYHVFPSFS…EIANDILGKM (165 aa)) is the TIR domain. E87 is a catalytic residue. LRR repeat units lie at residues 197–221 (MSSL…GIGK), 540–563 (IDET…LFLK), 587–609 (PSRL…NFHP), 610–632 (ENLV…VHSL), 633–656 (AGLR…SMAT), 658–679 (LETL…IQYL), 680–704 (NKLN…NLKS), 766–790 (SPTL…IQNL), 791–813 (YQLE…GINL), 814–834 (DSLI…PDIS), and 835–857 (TNIS…IEKL).

As to quaternary structure, interacts with EDS1. Ubiquitous.

The enzyme catalyses NAD(+) + H2O = ADP-D-ribose + nicotinamide + H(+). Its function is as follows. Disease resistance (R) protein that specifically recognizes the hopA1 type III effector avirulence protein from Pseudomonas syringae. Resistance proteins guard the plant against pathogens that contain an appropriate avirulence protein via an indirect interaction with this avirulence protein. That triggers a defense system including the hypersensitive response, which restricts the pathogen growth. This Arabidopsis thaliana (Mouse-ear cress) protein is Disease resistance protein RPS6.